The following is a 395-amino-acid chain: S-adenosylmethionine synthase (395 aa).

Residue His-14 coordinates ATP. Asp-16 is a Mg(2+) binding site. Residue Glu-42 coordinates K(+). Positions 55 and 98 each coordinate L-methionine. Residues Gln-98–Lys-108 are flexible loop. ATP is bound by residues Asp-174 to Lys-176, Arg-240 to Phe-241, Asp-249, Arg-255 to Lys-256, Ala-272, and Lys-276. Asp-249 is an L-methionine binding site. Position 280 (Lys-280) interacts with L-methionine.

This sequence belongs to the AdoMet synthase family. As to quaternary structure, homotetramer; dimer of dimers. Mg(2+) serves as cofactor. It depends on K(+) as a cofactor.

Its subcellular location is the cytoplasm. The enzyme catalyses L-methionine + ATP + H2O = S-adenosyl-L-methionine + phosphate + diphosphate. Its pathway is amino-acid biosynthesis; S-adenosyl-L-methionine biosynthesis; S-adenosyl-L-methionine from L-methionine: step 1/1. In terms of biological role, catalyzes the formation of S-adenosylmethionine (AdoMet) from methionine and ATP. The overall synthetic reaction is composed of two sequential steps, AdoMet formation and the subsequent tripolyphosphate hydrolysis which occurs prior to release of AdoMet from the enzyme. This Thermotoga maritima (strain ATCC 43589 / DSM 3109 / JCM 10099 / NBRC 100826 / MSB8) protein is S-adenosylmethionine synthase.